Consider the following 121-residue polypeptide: UPF0102 protein Strop_1320 (121 aa).

This sequence belongs to the UPF0102 family.

In Salinispora tropica (strain ATCC BAA-916 / DSM 44818 / JCM 13857 / NBRC 105044 / CNB-440), this protein is UPF0102 protein Strop_1320.